The chain runs to 108 residues: L-rhamnose mutarotase (108 aa).

A substrate-binding site is contributed by tyrosine 19. The active-site Proton donor is histidine 23. Residues tyrosine 45 and 80-81 contribute to the substrate site; that span reads WW.

This sequence belongs to the rhamnose mutarotase family. In terms of assembly, homodimer.

It is found in the cytoplasm. The catalysed reaction is alpha-L-rhamnose = beta-L-rhamnose. Its pathway is carbohydrate metabolism; L-rhamnose metabolism. In terms of biological role, involved in the anomeric conversion of L-rhamnose. This is L-rhamnose mutarotase from Ligilactobacillus salivarius (strain UCC118) (Lactobacillus salivarius).